A 663-amino-acid chain; its full sequence is Probable receptor-like protein kinase At1g49730 (663 aa).

The signal sequence occupies residues 1 to 25 (MVVNSQAFLLALIALLATQLPSLMA). The Extracellular portion of the chain corresponds to 26–254 (ADCPLDFSGS…TNPYHLTMVP (229 aa)). Residues Asn36, Asn46, Asn70, Asn101, and Asn171 are each glycosylated (N-linked (GlcNAc...) asparagine). The segment at 213 to 243 (SFSPVASPEPSPSTVGGISPSNSDSQMTTSR) is disordered. Polar residues predominate over residues 224–243 (PSTVGGISPSNSDSQMTTSR). A helical membrane pass occupies residues 255-275 (TIGIVVTAVALTMLVVLVILI). Topologically, residues 276–663 (RRKNRELDES…PHSPINGFSF (388 aa)) are cytoplasmic. Residues 327-609 (NDFNTVIGQG…ESCDPVHSAF (283 aa)) form the Protein kinase domain. Residues 333 to 341 (IGQGGFGTV) and Lys355 contribute to the ATP site. Asp451 serves as the catalytic Proton acceptor. A disordered region spans residues 631–663 (RGDSRIFGPSSSTTSRSHYSRSLPHSPINGFSF). Positions 640-652 (SSSTTSRSHYSRS) are enriched in low complexity.

It belongs to the protein kinase superfamily. Ser/Thr protein kinase family.

Its subcellular location is the cell membrane. It catalyses the reaction L-seryl-[protein] + ATP = O-phospho-L-seryl-[protein] + ADP + H(+). It carries out the reaction L-threonyl-[protein] + ATP = O-phospho-L-threonyl-[protein] + ADP + H(+). The sequence is that of Probable receptor-like protein kinase At1g49730 from Arabidopsis thaliana (Mouse-ear cress).